The sequence spans 163 residues: Cyclic pyranopterin monophosphate synthase (163 aa).

Substrate-binding positions include 75-77 (MCH) and 115-116 (ME). The active site involves Asp130.

The protein belongs to the MoaC family. In terms of assembly, homohexamer; trimer of dimers.

The enzyme catalyses (8S)-3',8-cyclo-7,8-dihydroguanosine 5'-triphosphate = cyclic pyranopterin phosphate + diphosphate. It functions in the pathway cofactor biosynthesis; molybdopterin biosynthesis. Its function is as follows. Catalyzes the conversion of (8S)-3',8-cyclo-7,8-dihydroguanosine 5'-triphosphate to cyclic pyranopterin monophosphate (cPMP). This is Cyclic pyranopterin monophosphate synthase from Bacillus pumilus (strain SAFR-032).